A 406-amino-acid polypeptide reads, in one-letter code: Erythromycin esterase type I (406 aa).

This enzyme confers resistance to erythromycin through inactivation by hydrolyzing the lactone ring of the antibiotic. The protein is Erythromycin esterase type I (ereA) of Escherichia coli.